The chain runs to 22 residues: MICOS complex subunit MIC60 (22 aa).

It belongs to the MICOS complex subunit Mic60 family. As to quaternary structure, component of the mitochondrial contact site and cristae organizing system (MICOS) complex, composed of at least MICOS10/MIC10, CHCHD3/MIC19, CHCHD6/MIC25, APOOL/MIC27, IMMT/MIC60, APOO/MIC23/MIC26 and MICOS13/MIC13. This complex was also known under the names MINOS or MitOS complex. The MICOS complex associates with mitochondrial outer membrane proteins SAMM50, MTX1 and MTX2 (together described as components of the mitochondrial outer membrane sorting assembly machinery (SAM) complex) and DNAJC11, mitochondrial inner membrane protein TMEM11 and with HSPA9. The MICOS and SAM complexes together with DNAJC11 are part of a large protein complex spanning both membranes termed the mitochondrial intermembrane space bridging (MIB) complex. Interacts with HSPA1A/HSPA1B and OPA1, preferentially with the soluble OPA1 form. Interacts with MICOS13/MIC13, MICOS10/MIC10, CHCHD3/MIC19, CHCHD6/MIC25, SAMM50 and TMEM11. Interacts with APOO/MIC23/MIC26 and APOOL/MIC27. Interacts with ARMC1. Interacts with ARMC12.

The protein resides in the mitochondrion inner membrane. It localises to the mitochondrion. Component of the MICOS complex, a large protein complex of the mitochondrial inner membrane that plays crucial roles in the maintenance of crista junctions, inner membrane architecture, and formation of contact sites to the outer membrane. Plays an important role in the maintenance of the MICOS complex stability and the mitochondrial cristae morphology. This is MICOS complex subunit MIC60 from Mesocricetus auratus (Golden hamster).